We begin with the raw amino-acid sequence, 340 residues long: Uroporphyrinogen decarboxylase (340 aa).

Substrate is bound by residues 23–27 (RQAGR), Asp-72, Tyr-147, Thr-202, and His-316.

It belongs to the uroporphyrinogen decarboxylase family. Homodimer.

The protein localises to the cytoplasm. It catalyses the reaction uroporphyrinogen III + 4 H(+) = coproporphyrinogen III + 4 CO2. Its pathway is porphyrin-containing compound metabolism; protoporphyrin-IX biosynthesis; coproporphyrinogen-III from 5-aminolevulinate: step 4/4. In terms of biological role, catalyzes the decarboxylation of four acetate groups of uroporphyrinogen-III to yield coproporphyrinogen-III. The polypeptide is Uroporphyrinogen decarboxylase (Geobacter sulfurreducens (strain ATCC 51573 / DSM 12127 / PCA)).